The following is a 674-amino-acid chain: Methionine--tRNA ligase (674 aa).

The 'HIGH' region motif lies at 11–21 (PYANGDLHLGH). Positions 142, 145, 155, and 158 each coordinate Zn(2+). A 'KMSKS' region motif is present at residues 330 to 334 (KMSKS). Residue K333 coordinates ATP. The 101-residue stretch at 574–674 (DFMKVDLRIA…EGAQPGMRVK (101 aa)) folds into the tRNA-binding domain.

This sequence belongs to the class-I aminoacyl-tRNA synthetase family. MetG type 1 subfamily. Homodimer. Zn(2+) serves as cofactor.

The protein localises to the cytoplasm. It carries out the reaction tRNA(Met) + L-methionine + ATP = L-methionyl-tRNA(Met) + AMP + diphosphate. Is required not only for elongation of protein synthesis but also for the initiation of all mRNA translation through initiator tRNA(fMet) aminoacylation. This chain is Methionine--tRNA ligase, found in Francisella tularensis subsp. tularensis (strain WY96-3418).